Consider the following 212-residue polypeptide: Uridine kinase (212 aa).

ATP is bound at residue 13-20; it reads GASASGKS.

It belongs to the uridine kinase family.

The protein resides in the cytoplasm. It carries out the reaction uridine + ATP = UMP + ADP + H(+). The catalysed reaction is cytidine + ATP = CMP + ADP + H(+). It functions in the pathway pyrimidine metabolism; CTP biosynthesis via salvage pathway; CTP from cytidine: step 1/3. Its pathway is pyrimidine metabolism; UMP biosynthesis via salvage pathway; UMP from uridine: step 1/1. The chain is Uridine kinase from Shewanella frigidimarina (strain NCIMB 400).